A 161-amino-acid polypeptide reads, in one-letter code: Vitamin K epoxide reductase complex subunit 1 (161 aa).

At methionine 1–glycine 9 the chain is on the cytoplasmic side. The chain crosses the membrane as a helical span at residues leucine 10–valine 29. The Lumenal portion of the chain corresponds to lysine 30 to asparagine 80. Cysteines 43 and 51 form a disulfide. Asparagine 80 is a binding site for (S)-warfarin. A helical transmembrane segment spans residues serine 81–glycine 95. Residues cysteine 96 to arginine 100 are Cytoplasmic-facing. Residues tryptophan 101 to leucine 128 form a helical membrane-spanning segment. The Lumenal segment spans residues tyrosine 129 to phenylalanine 131. A disulfide bond links cysteine 132 and cysteine 135. The chain crosses the membrane as a helical span at residues cysteine 132–valine 153. 2 residues coordinate phylloquinone: cysteine 135 and tyrosine 139. Tyrosine 139 contacts (S)-warfarin. Residues proline 154–histidine 161 are Cytoplasmic-facing.

It belongs to the VKOR family. As to expression, detected in liver.

Its subcellular location is the endoplasmic reticulum membrane. It carries out the reaction phylloquinone + [protein]-disulfide + H2O = 2,3-epoxyphylloquinone + [protein]-dithiol. The catalysed reaction is phylloquinol + [protein]-disulfide = phylloquinone + [protein]-dithiol. Inhibited by warfarin (coumadin). Warfarin locks VKORC1 in both redox states into the closed conformation. In terms of biological role, involved in vitamin K metabolism. Catalytic subunit of the vitamin K epoxide reductase (VKOR) complex which reduces inactive vitamin K 2,3-epoxide to active vitamin K. Vitamin K is required for the gamma-carboxylation of various proteins, including clotting factors, and is required for normal blood coagulation, but also for normal bone development. This chain is Vitamin K epoxide reductase complex subunit 1 (Vkorc1), found in Mus musculus (Mouse).